A 422-amino-acid polypeptide reads, in one-letter code: MRSVLSLALLAANVVTAAVVAPFDYSGYKVIRVPTQKDNVKEVQRIITDLNLDTWKYPKSEGQNADIVVPPSQISSFMERISGMNIEMMHEDLGLSIRNETSFEAYSAGYAPDINWFKSYHSYQDHLSYLQDLQGLFRTRSEYVDAGKSHEGRTIPALHIWGSGGKNSKPAIIFHGTIHAREWITTMVTEYMAWSFLSQYNKNADITSIVDNFDIWIFPIVNPDGFAFTQTSNRLWRKNRQPNPNARCPGRDLNRNYPYQWVGPGSSSNPCSDTYRGAQPGDGTEIKVHIANMKKIAANKGIAMFVDWHSYGQLFMSPYGYSCTARPPTDARHQELSRIFAQALKAVHGTPYKTGPICNTIYQVNGDSVDYALEVLKVKLSLTAELRDTGARGFVLPADQIIPSGEETLAGTVAMLKAVIQG.

The signal sequence occupies residues 1–17; the sequence is MRSVLSLALLAANVVTA. Residues 18 to 112 constitute a propeptide, activation peptide; that stretch reads AVVAPFDYSG…FEAYSAGYAP (95 aa). A Peptidase M14 domain is found at 119 to 419; the sequence is SYHSYQDHLS…AGTVAMLKAV (301 aa). Positions 179 and 182 each coordinate Zn(2+). Substrate is bound by residues 179 to 182, Arg237, and 254 to 255; these read HARE and NR. An intrachain disulfide couples Cys248 to Cys271. His309 serves as a coordination point for Zn(2+). Residue 310–311 participates in substrate binding; sequence SY. The active-site Proton donor/acceptor is the Glu385.

This sequence belongs to the peptidase M14 family. Zn(2+) is required as a cofactor.

Its subcellular location is the secreted. Extracellular metalloprotease that contributes to pathogenicity. This chain is Probable metallocarboxypeptidase A (MCPA), found in Arthroderma benhamiae (strain ATCC MYA-4681 / CBS 112371) (Trichophyton mentagrophytes).